The following is a 109-amino-acid chain: Ribonuclease P protein component (109 aa).

The protein belongs to the RnpA family. Consists of a catalytic RNA component (M1 or rnpB) and a protein subunit.

It carries out the reaction Endonucleolytic cleavage of RNA, removing 5'-extranucleotides from tRNA precursor.. In terms of biological role, RNaseP catalyzes the removal of the 5'-leader sequence from pre-tRNA to produce the mature 5'-terminus. It can also cleave other RNA substrates such as 4.5S RNA. The protein component plays an auxiliary but essential role in vivo by binding to the 5'-leader sequence and broadening the substrate specificity of the ribozyme. The polypeptide is Ribonuclease P protein component (Streptococcus agalactiae serotype III (strain NEM316)).